The chain runs to 543 residues: MEFAEMIRTGQAQAELLRGPEEPPLRGTLCITGHHLLLSPGPQATPDLWLLLLRNVDSIEKRVAGDSGTITLRCKDLRVLQLDIEGVEATLDIARSIEALSSLESVITSFPFFYRPKGLRLGDAWHFHPPECYYKRVARETNAWRLSEANEDFSLCPSYPRAVIVPRAVDDSAVARSARFRQGGRFPVLSYYHAPSGTVLLRAGQPLTGPQKRRCSEDEELLRAVLAGARPGARGFIVDTRSPQAAKQARMTGGGTEAKAAYPGWKRLHRPLERGRPLQESFVRLVEACGDLEQSMDRWLNRLESCRWLSHVKETLSTACLAAQSMEQEGACILVHGAEGTDSTLLITSLAQLILDPLSRTMAGFQELIEREWVQAGHPFQLRCAHSAFSHARPKHEAPTFLLFLDCVWQLGRQFPLSLEFGEGMLLALFDHAYASPFGTFLCNNEKERCLCEVRTRTHSLWSGLSQPKEQRKLRNPLYVPNPLAIWPSAEPQSLRLWQGLFLRGTRPPEPSEVAWEKVWQIVTDQEKTEGSQPTDSASEPGP.

The Myotubularin phosphatase domain occupies 124 to 502 (AWHFHPPECY…QSLRLWQGLF (379 aa)).

This sequence belongs to the protein-tyrosine phosphatase family. Non-receptor class myotubularin subfamily.

Its function is as follows. Probable pseudophosphatase. The protein is Myotubularin-related protein 9-like of Bos taurus (Bovine).